The following is a 53-amino-acid chain: MLRYAAIFFIIAIIAAVFGFGGIAAGATEIAKVLFFIFVVIFLVTLLMGVMRR.

The next 2 membrane-spanning stretches (helical) occupy residues 5 to 25 and 30 to 50; these read AAIF…GIAA and IAKV…LMGV.

It belongs to the UPF0391 family.

Its subcellular location is the cell membrane. The protein is UPF0391 membrane protein Bxeno_A1464 of Paraburkholderia xenovorans (strain LB400).